The sequence spans 373 residues: Ubiquitin domain-containing protein DSK2 (373 aa).

Positions 1–76 (MSLNIHIKSG…SVHLVKSQPK (76 aa)) constitute a Ubiquitin-like domain. Residues lysine 13 and lysine 76 each participate in a glycyl lysine isopeptide (Lys-Gly) (interchain with G-Cter in ubiquitin) cross-link. Residues 221–270 (DPNAGMGSAGGAASAFPAPGGDAPEEGSNTNTTSSSNTGNNAGTNAGTNA) form a disordered region. Over residues 231–270 (GAASAFPAPGGDAPEEGSNTNTTSSSNTGNNAGTNAGTNA) the composition is skewed to low complexity. Residues 327-371 (PPEERYEHQLRQLNDMGFFDFDRNVAALRRSGGSVQGALDSLLNG) enclose the UBA domain.

It is found in the nucleus. Its function is as follows. Involved, with RAD23 in spindle pole body duplication. Involved in the ubiquitin-proteasome proteolytic pathway. In Saccharomyces cerevisiae (strain ATCC 204508 / S288c) (Baker's yeast), this protein is Ubiquitin domain-containing protein DSK2 (DSK2).